The following is a 182-amino-acid chain: Dual-action ribosomal maturation protein DarP (182 aa).

The protein belongs to the DarP family.

The protein resides in the cytoplasm. Its function is as follows. Member of a network of 50S ribosomal subunit biogenesis factors which assembles along the 30S-50S interface, preventing incorrect 23S rRNA structures from forming. Promotes peptidyl transferase center (PTC) maturation. The sequence is that of Dual-action ribosomal maturation protein DarP from Yersinia pestis.